A 272-amino-acid polypeptide reads, in one-letter code: Pantothenate synthetase (272 aa).

ATP is bound at residue 27–34; that stretch reads MGALHNGH. Histidine 34 (proton donor) is an active-site residue. A (R)-pantoate-binding site is contributed by glutamine 58. Residue glutamine 58 participates in beta-alanine binding. Residue 143–146 coordinates ATP; sequence GKKD. A (R)-pantoate-binding site is contributed by glutamine 149. Residues valine 172 and 180–183 each bind ATP; that span reads LSSR.

The protein belongs to the pantothenate synthetase family. In terms of assembly, homodimer.

The protein resides in the cytoplasm. The enzyme catalyses (R)-pantoate + beta-alanine + ATP = (R)-pantothenate + AMP + diphosphate + H(+). The protein operates within cofactor biosynthesis; (R)-pantothenate biosynthesis; (R)-pantothenate from (R)-pantoate and beta-alanine: step 1/1. Functionally, catalyzes the condensation of pantoate with beta-alanine in an ATP-dependent reaction via a pantoyl-adenylate intermediate. The chain is Pantothenate synthetase from Aliarcobacter butzleri (strain RM4018) (Arcobacter butzleri).